The primary structure comprises 376 residues: CCA-adding enzyme (376 aa).

Residues glycine 23 and arginine 26 each coordinate ATP. The CTP site is built by glycine 23 and arginine 26. Positions 36 and 38 each coordinate Mg(2+). ATP contacts are provided by arginine 106, arginine 152, and arginine 155. The CTP site is built by arginine 106, arginine 152, and arginine 155.

It belongs to the tRNA nucleotidyltransferase/poly(A) polymerase family. Bacterial CCA-adding enzyme type 2 subfamily. Mg(2+) serves as cofactor.

It catalyses the reaction a tRNA precursor + 2 CTP + ATP = a tRNA with a 3' CCA end + 3 diphosphate. The enzyme catalyses a tRNA with a 3' CCA end + 2 CTP + ATP = a tRNA with a 3' CCACCA end + 3 diphosphate. Functionally, catalyzes the addition and repair of the essential 3'-terminal CCA sequence in tRNAs without using a nucleic acid template. Adds these three nucleotides in the order of C, C, and A to the tRNA nucleotide-73, using CTP and ATP as substrates and producing inorganic pyrophosphate. tRNA 3'-terminal CCA addition is required both for tRNA processing and repair. Also involved in tRNA surveillance by mediating tandem CCA addition to generate a CCACCA at the 3' terminus of unstable tRNAs. While stable tRNAs receive only 3'-terminal CCA, unstable tRNAs are marked with CCACCA and rapidly degraded. The protein is CCA-adding enzyme of Coxiella burnetii (strain RSA 331 / Henzerling II).